Consider the following 131-residue polypeptide: MAKSSPTYTVLFLLGLLALSTATTTFQNEGQRSLIGQFNSRGTFKKIKNHPSESVQRSNEDFAMHKTKLKHKFVARSGGETDVKKMEGSMPDQGKTAGRDQQVTVQNIKEASKENVGGNTNDIYKSGGMHH.

Residues 1–22 (MAKSSPTYTVLFLLGLLALSTA) form the signal peptide. Residues 75-101 (ARSGGETDVKKMEGSMPDQGKTAGRDQ) form a disordered region.

In terms of tissue distribution, tapetum of anthers.

This is Protein TAP2 (TAP2) from Antirrhinum majus (Garden snapdragon).